The sequence spans 132 residues: MAAGGELSYEELLDHILNNKPIPNIVEVPNVTLDEGLASTPSLRPRPRPWEGQLQHQSHQGSLDKPNISLDIDQESLEGMTSLTRLSECYDIQSKLQINDSDNDNDDNNNDNNKGDGNDDDNNTVTANPTAR.

2 disordered regions span residues 36–69 (GLAS…PNIS) and 97–132 (QIND…PTAR). Serine 101 is modified (phosphoserine).

Copurifies with proteins HOL1, MMP1, PEX7 and PLB1.

This is an uncharacterized protein from Saccharomyces cerevisiae (strain ATCC 204508 / S288c) (Baker's yeast).